A 92-amino-acid chain; its full sequence is Transcription factor PRE1 (92 aa).

Positions 4–59 (RRSRQSSSAPRISDNQMIDLVSKLRQILPEIGQRRRSDKASASKVLQETCNYIRNL) constitute a bHLH domain.

Interacts with IBH1 and HFR1. In terms of tissue distribution, expressed in roots, leaves, stems and flowers.

Its subcellular location is the nucleus. Atypical and probable non DNA-binding bHLH transcription factor that integrates multiple signaling pathways to regulate cell elongation and plant development. Binds IBH1, forming a pair of antagonistic bHLH transcription factors that function downstream of BZR1 to mediate brassinosteroid regulation of cell elongation. Regulates light responses by binding and inhibiting the activity of the bHLH transcription factor HFR1, a critical regulator of light signaling and shade avoidance. May have a regulatory role in various aspects of gibberellin-dependent growth and development. In Arabidopsis thaliana (Mouse-ear cress), this protein is Transcription factor PRE1 (PRE1).